Consider the following 597-residue polypeptide: Probable translation initiation factor IF-2 (597 aa).

The tr-type G domain occupies 8–225 (LRQPIVVVLG…LLAGLTQQYL (218 aa)). The tract at residues 17 to 24 (GHVDHGKT) is G1. 17 to 24 (GHVDHGKT) provides a ligand contact to GTP. The interval 42 to 46 (EMTQE) is G2. Positions 81–84 (DTPG) are G3. GTP is bound by residues 81 to 85 (DTPGH) and 135 to 138 (NKID). The segment at 135–138 (NKID) is G4. The segment at 203 to 205 (SGK) is G5.

The protein belongs to the TRAFAC class translation factor GTPase superfamily. Classic translation factor GTPase family. IF-2 subfamily.

Function in general translation initiation by promoting the binding of the formylmethionine-tRNA to ribosomes. Seems to function along with eIF-2. The sequence is that of Probable translation initiation factor IF-2 from Metallosphaera sedula (strain ATCC 51363 / DSM 5348 / JCM 9185 / NBRC 15509 / TH2).